Reading from the N-terminus, the 217-residue chain is Adenylate kinase (217 aa).

11 to 16 (GAGKGT) provides a ligand contact to ATP. Residues 31-60 (STGDMFREAMANETPVGLEAKSYIDKGDLV) form an NMP region. AMP-binding positions include T32, R37, 58–60 (DLV), 86–89 (GFPR), and Q93. The LID stretch occupies residues 127–165 (ARYICKNCGATYNKISNPTKVEGTCDRCGGHEFFQREDD). Residue R128 coordinates ATP. Zn(2+) contacts are provided by C131 and C134. 137 to 138 (TY) serves as a coordination point for ATP. The Zn(2+) site is built by C151 and C154. R162 and R173 together coordinate AMP. Position 201 (Q201) interacts with ATP.

It belongs to the adenylate kinase family. Monomer.

The protein localises to the cytoplasm. The catalysed reaction is AMP + ATP = 2 ADP. Its pathway is purine metabolism; AMP biosynthesis via salvage pathway; AMP from ADP: step 1/1. Catalyzes the reversible transfer of the terminal phosphate group between ATP and AMP. Plays an important role in cellular energy homeostasis and in adenine nucleotide metabolism. This chain is Adenylate kinase, found in Lactobacillus gasseri (strain ATCC 33323 / DSM 20243 / BCRC 14619 / CIP 102991 / JCM 1131 / KCTC 3163 / NCIMB 11718 / NCTC 13722 / AM63).